Reading from the N-terminus, the 393-residue chain is Pre-mRNA-splicing regulator WTAP (393 aa).

The disordered stretch occupies residues 240-393 (QQQIQTSGNR…SSVNVQGSVL (154 aa)). Residues 254–267 (ESKDEGETSGKDCG) are compositionally biased toward basic and acidic residues. The segment covering 272-286 (GPSNGGSSHQRTHSS) has biased composition (polar residues). Positions 310–319 (LPNHSEERTS) are enriched in basic and acidic residues. Over residues 320-353 (RGGSSYMNQLSTGYESVDSPTGSENSLTHQSNDT) the composition is skewed to polar residues. Basic and acidic residues predominate over residues 354–365 (DSNHDSQEEKPV). Residues 369–393 (GNRTVSSRHLQNGLDSSVNVQGSVL) show a composition bias toward polar residues.

It belongs to the fl(2)d family. In terms of assembly, component of the WMM complex, a N6-methyltransferase complex composed of a catalytic subcomplex, named MAC, and of an associated subcomplex, named MACOM. Component of the MACOM subcomplex.

The protein resides in the nucleus speckle. The protein localises to the nucleus. It localises to the nucleoplasm. In terms of biological role, associated component of the WMM complex, a complex that mediates N6-methyladenosine (m6A) methylation of RNAs, a modification that plays a role in the efficiency of mRNA splicing and RNA processing. The chain is Pre-mRNA-splicing regulator WTAP from Xenopus tropicalis (Western clawed frog).